The sequence spans 605 residues: MSWGTELWDQFDSLDKHTQWGIDFLERYAKFVKERIEIEQNYAKQLRNLVKKYCPKRSSKDEEPRFTSCIAFFNILNELNDYAGQREVVAEEMAHRVYGELMRYAHDLKTERKMHLQEGRKAQQYLDMCWKQMDNSKKKFERECREAEKAQQSYERLDNDTNATKADVEKAKQQLNLRTHMADENKNEYAAQLQNFNGEQHKHFYVVIPQIYKQLQEMDERRTIKLSECYRGFADSERKVIPIISKCLEGMILAAKSVDERRDSQMVVDSFKSGFEPPGDFPFEDYSQHIYRTISDGTISAAKQESGKMDSKSTVGKAKGKLWLFGKKPKPQSPPLTPTSLFTSSTPNGSQFLTLSIEPVHYCMNEIKTGKPRIPSFRSLKRGVSLIMGPALEDFSHLPPEQRRKKLQQRIDELNRGLQKEADQKEALNKMKDVYEKNPQMGDPGSLQPKLAETMNNIDRLRMEIHKNEAWLSEVEGKTGIRGDRRHSSDINHLVTQGRESPEGSYTDDANQEVRGPPQQHGHHSEFDDEFEDDDPLPAIGHCKAIYPFDGHNEGTLAMKEGEVLYIIEEDKGDGWTRARRQNGEEGYVPTTYIDVTLEKSSKGS.

In terms of domain architecture, F-BAR spans 1 to 263; the sequence is MSWGTELWDQ…AAKSVDERRD (263 aa). The stretch at 66–258 forms a coiled coil; the sequence is FTSCIAFFNI…EGMILAAKSV (193 aa). The tract at residues 245–535 is interaction with CDC42; sequence SKCLEGMILA…EFDDEFEDDD (291 aa). S295 bears the Phosphoserine mark. A coiled-coil region spans residues 392 to 484; it reads LEDFSHLPPE…VEGKTGIRGD (93 aa). Residues 397 to 474 form the REM-1 domain; the sequence is HLPPEQRRKK…IHKNEAWLSE (78 aa). Positions 482–538 are disordered; that stretch reads RGDRRHSSDINHLVTQGRESPEGSYTDDANQEVRGPPQQHGHHSEFDDEFEDDDPLP. Residues S488, S501, and S505 each carry the phosphoserine modification. The interval 522–605 is interaction with DNM1; sequence GHHSEFDDEF…VTLEKSSKGS (84 aa). Acidic residues predominate over residues 527 to 536; sequence FDDEFEDDDP. Residues 538–599 enclose the SH3 domain; sequence PAIGHCKAIY…PTTYIDVTLE (62 aa). The interaction with DNM2 and WASL stretch occupies residues 541 to 597; sequence GHCKAIYPFDGHNEGTLAMKEGEVLYIIEEDKGDGWTRARRQNGEEGYVPTTYIDVT. Residues 541 to 605 are interaction with DAAM1, DIAPH1 and DIAPH2; the sequence is GHCKAIYPFD…VTLEKSSKGS (65 aa).

The protein belongs to the FNBP1 family. As to quaternary structure, homodimerizes, the dimers can polymerize end-to-end to form filamentous structures. Interacts with GTP-bound CDC42. Interacts with DAAM1, DIAPH1, DIAPH2, DNM1, DNM2 and WASL/N-WASP. Interacts with ATG3. Interacts (via SH3 domain) with ABI1, WASF2, CDC42 and WIPF1.

It localises to the cytoplasm. It is found in the cytoskeleton. Its subcellular location is the cell cortex. The protein resides in the cytoplasmic vesicle. The protein localises to the cell membrane. In terms of biological role, required to coordinate membrane tubulation with reorganization of the actin cytoskeleton during endocytosis. May bind to lipids such as phosphatidylinositol 4,5-bisphosphate and phosphatidylserine and promote membrane invagination and the formation of tubules. Also promotes CDC42-induced actin polymerization by activating the WASL-WASPIP complex, the predominant form of WASL/N-WASP in cells. Actin polymerization may promote the fission of membrane tubules to form endocytic vesicles. Essential for autophagy of intracellular bacterial pathogens. This chain is Formin-binding protein 1-like (Fnbp1l), found in Mus musculus (Mouse).